We begin with the raw amino-acid sequence, 574 residues long: Putative dehydratase IlvD1 (574 aa).

2 residues coordinate [4Fe-4S] cluster: Cys-124 and Cys-197.

Belongs to the IlvD/Edd family. It depends on [4Fe-4S] cluster as a cofactor.

Functionally, involved in the degradation of galactose via the DeLey-Doudoroff pathway. The protein is Putative dehydratase IlvD1 (ilvD1) of Rhizobium meliloti (strain 1021) (Ensifer meliloti).